The following is a 109-amino-acid chain: Fluoride-specific ion channel FluC 1 (109 aa).

3 helical membrane-spanning segments follow: residues 21–41 (FYFKNNFVISIIGSFLYGFFI), 52–72 (ILFSGFFACFTSFSGFVHFLY), and 83–103 (LFIYLNVIVILNLIIMYIGFQ).

Belongs to the fluoride channel Fluc/FEX (TC 1.A.43) family.

It localises to the cell inner membrane. It carries out the reaction fluoride(in) = fluoride(out). In terms of biological role, fluoride-specific ion channel. Important for reducing fluoride concentration in the cell, thus reducing its toxicity. The sequence is that of Fluoride-specific ion channel FluC 1 from Prochlorococcus marinus subsp. pastoris (strain CCMP1986 / NIES-2087 / MED4).